The chain runs to 470 residues: MNPNQKILCTSATALVIGTIAVLIGITNLGLNIGLHLKPSCNCSHSQPEATNASQTIINNYYNDTNITQISNTNIQVEERAIRDFNNLTKGLCTINSWHIYGKDNAVRIGEDSDVLVTREPYVSCDPDECRFYALSQGTTIRGKHSNGTIHDRSQYRALISWPLSSPPTVYNSRVECIGWSSTSCHDGKTRMSICISGPNNNASAVIWYNRRPVTEINTWARNILRTQESECVCHNGVCPVVFTDGSATGPAETRIYYFKEGKILKWEPLAGTAKHIEECSCYGERAEITCTCRDNWQGSNRPVIRIDPVAMTHTSQYICSPVLTDNPRPNDPTVGKCNDPYPGNNNNGVKGFSYLDGVNTWLGRTISIASRSGYEMLKVPNALTDDKSKPTQGQTIVLNTDWSGYSGSFMDYWAEGECYRACFYVELIRGRPKEDKVWWTSNSIVSMCSSTEFLGQWDWPDGAKIEYFL.

Over 1-14 (MNPNQKILCTSATA) the chain is Intravirion. The involved in apical transport and lipid raft association stretch occupies residues 11–33 (SATALVIGTIAVLIGITNLGLNI). Residues 15-35 (LVIGTIAVLIGITNLGLNIGL) traverse the membrane as a helical segment. The segment at 36–89 (HLKPSCNCSHSQPEATNASQTIINNYYNDTNITQISNTNIQVEERAIRDFNNLT) is hypervariable stalk region. Residues 36–470 (HLKPSCNCSH…PDGAKIEYFL (435 aa)) lie on the Virion surface side of the membrane. N-linked (GlcNAc...) asparagine; by host glycans are attached at residues Asn42, Asn52, Asn63, Asn66, and Asn87. The interval 92 to 470 (LCTINSWHIY…PDGAKIEYFL (379 aa)) is head of neuraminidase. 9 disulfide bridges follow: Cys93/Cys419, Cys125/Cys130, Cys177/Cys195, Cys185/Cys232, Cys234/Cys239, Cys280/Cys293, Cys282/Cys291, Cys320/Cys338, and Cys423/Cys449. A substrate-binding site is contributed by Arg119. N-linked (GlcNAc...) asparagine; by host glycosylation occurs at Asn147. The Proton donor/acceptor role is filled by Asp152. Position 153 (Arg153) interacts with substrate. The N-linked (GlcNAc...) asparagine; by host glycan is linked to Asn202. 278 to 279 (EE) serves as a coordination point for substrate. Arg294 provides a ligand contact to substrate. Asp295, Gly299, Asp326, and Asn348 together coordinate Ca(2+). Arg372 lines the substrate pocket. The active-site Nucleophile is the Tyr406.

It belongs to the glycosyl hydrolase 34 family. As to quaternary structure, homotetramer. Requires Ca(2+) as cofactor. Post-translationally, N-glycosylated.

The protein localises to the virion membrane. It localises to the host apical cell membrane. It catalyses the reaction Hydrolysis of alpha-(2-&gt;3)-, alpha-(2-&gt;6)-, alpha-(2-&gt;8)- glycosidic linkages of terminal sialic acid residues in oligosaccharides, glycoproteins, glycolipids, colominic acid and synthetic substrates.. Inhibited by the neuraminidase inhibitors zanamivir (Relenza) and oseltamivir (Tamiflu). These drugs interfere with the release of progeny virus from infected cells and are effective against all influenza strains. Resistance to neuraminidase inhibitors is quite rare. Its function is as follows. Catalyzes the removal of terminal sialic acid residues from viral and cellular glycoconjugates. Cleaves off the terminal sialic acids on the glycosylated HA during virus budding to facilitate virus release. Additionally helps virus spread through the circulation by further removing sialic acids from the cell surface. These cleavages prevent self-aggregation and ensure the efficient spread of the progeny virus from cell to cell. Otherwise, infection would be limited to one round of replication. Described as a receptor-destroying enzyme because it cleaves a terminal sialic acid from the cellular receptors. May facilitate viral invasion of the upper airways by cleaving the sialic acid moieties on the mucin of the airway epithelial cells. Likely to plays a role in the budding process through its association with lipid rafts during intracellular transport. May additionally display a raft-association independent effect on budding. Plays a role in the determination of host range restriction on replication and virulence. Sialidase activity in late endosome/lysosome traffic seems to enhance virus replication. The protein is Neuraminidase of Aves.